The chain runs to 222 residues: GEM-like protein 4 (222 aa).

A GRAM domain is found at 95–173; that stretch reads KIFKRLFRVS…CKIDRVNQSQ (79 aa).

This sequence belongs to the GEM family.

This Arabidopsis thaliana (Mouse-ear cress) protein is GEM-like protein 4.